The chain runs to 241 residues: Triosephosphate isomerase (241 aa).

A substrate-binding site is contributed by 9 to 11 (NWK). The active-site Electrophile is the His96. The Proton acceptor role is filled by Glu165. Substrate is bound by residues Gly171, Ser204, and 225-226 (GG).

It belongs to the triosephosphate isomerase family. Homodimer.

The protein localises to the cytoplasm. It catalyses the reaction D-glyceraldehyde 3-phosphate = dihydroxyacetone phosphate. It functions in the pathway carbohydrate biosynthesis; gluconeogenesis. Its pathway is carbohydrate degradation; glycolysis; D-glyceraldehyde 3-phosphate from glycerone phosphate: step 1/1. Involved in the gluconeogenesis. Catalyzes stereospecifically the conversion of dihydroxyacetone phosphate (DHAP) to D-glyceraldehyde-3-phosphate (G3P). The chain is Triosephosphate isomerase from Picosynechococcus sp. (strain ATCC 27264 / PCC 7002 / PR-6) (Agmenellum quadruplicatum).